Consider the following 22-residue polypeptide: Proline-rich peptide (22 aa).

A disordered region spans residues 1–22 (FVDRNRIPRSNNGPKIPIISNP).

It localises to the secreted. Its function is as follows. Antibacterial peptide active against Gram-positive bacterium M.luteus and Gram-negative bacterium E.coli. This Calliphora vicina (Blue blowfly) protein is Proline-rich peptide.